The following is a 332-amino-acid chain: MKTLGEFIVEKQHEFSHATGELTALLSAIKLGAKIIHRDINKAGLVDILGASGAENVQGEVQQKLDLFANEKLKAALRARDIVAGIASEEEDEIVVFEGCEHAKYVVLMDPLDGSSNIDVNVSVGTIFSIYRRVTPVGTPVTEEDFLQPGNKQVAAGYVVYGSSTMLVYTTGCGVHAFTYDPSLGVFCLCQERMRFPEKGNTYSINEGNYIKFPQGVKKYIKYCQEEDKATQRPYTSRYIGSLVADFHRNLLKGGIYLYPSTASHPEGKLRLLYECNPMAFLAEQAGGKASDGKERILDIIPESLHQRRSFFVGNNHMVEDVENFIKAFPDA.

Residues Glu-89, Asp-110, Leu-112, and Asp-113 each coordinate Mg(2+). Substrate contacts are provided by residues 113-116 (DGSS), Asn-206, Tyr-239, 257-259 (YLY), and Lys-269. Residue Glu-275 coordinates Mg(2+).

Belongs to the FBPase class 1 family. As to quaternary structure, homotetramer. It depends on Mg(2+) as a cofactor.

Its subcellular location is the cytoplasm. It catalyses the reaction beta-D-fructose 1,6-bisphosphate + H2O = beta-D-fructose 6-phosphate + phosphate. It functions in the pathway carbohydrate biosynthesis; gluconeogenesis. This chain is Fructose-1,6-bisphosphatase class 1, found in Klebsiella pneumoniae subsp. pneumoniae (strain ATCC 700721 / MGH 78578).